Here is a 68-residue protein sequence, read N- to C-terminus: Large ribosomal subunit protein bL32 (68 aa).

The tract at residues 1-21 (MAVQQNKVSKSRRNNRRAHDS) is disordered.

This sequence belongs to the bacterial ribosomal protein bL32 family.

This chain is Large ribosomal subunit protein bL32, found in Roseobacter denitrificans (strain ATCC 33942 / OCh 114) (Erythrobacter sp. (strain OCh 114)).